The primary structure comprises 555 residues: CTP synthase (555 aa).

An amidoligase domain region spans residues 1–279 (MATNRAKSST…DNYIIRRLNL (279 aa)). Serine 21 provides a ligand contact to CTP. Serine 21 lines the UTP pocket. ATP-binding positions include 22–27 (SLGKGL) and aspartate 79. Residues aspartate 79 and glutamate 153 each contribute to the Mg(2+) site. CTP is bound by residues 160-162 (DIE), 200-205 (KTKPTQ), and lysine 236. Residues 200–205 (KTKPTQ) and lysine 236 each bind UTP. One can recognise a Glutamine amidotransferase type-1 domain in the interval 304–553 (TIGIVGKYID…VDAALKHQAG (250 aa)). Glycine 367 contributes to the L-glutamine binding site. The active-site Nucleophile; for glutamine hydrolysis is cysteine 394. L-glutamine contacts are provided by residues 395 to 398 (LGLQ), glutamate 417, and arginine 478. Residues histidine 526 and glutamate 528 contribute to the active site.

It belongs to the CTP synthase family. As to quaternary structure, homotetramer.

The enzyme catalyses UTP + L-glutamine + ATP + H2O = CTP + L-glutamate + ADP + phosphate + 2 H(+). The catalysed reaction is L-glutamine + H2O = L-glutamate + NH4(+). It carries out the reaction UTP + NH4(+) + ATP = CTP + ADP + phosphate + 2 H(+). It participates in pyrimidine metabolism; CTP biosynthesis via de novo pathway; CTP from UDP: step 2/2. With respect to regulation, allosterically activated by GTP, when glutamine is the substrate; GTP has no effect on the reaction when ammonia is the substrate. The allosteric effector GTP functions by stabilizing the protein conformation that binds the tetrahedral intermediate(s) formed during glutamine hydrolysis. Inhibited by the product CTP, via allosteric rather than competitive inhibition. Its function is as follows. Catalyzes the ATP-dependent amination of UTP to CTP with either L-glutamine or ammonia as the source of nitrogen. Regulates intracellular CTP levels through interactions with the four ribonucleotide triphosphates. In Corynebacterium jeikeium (strain K411), this protein is CTP synthase.